A 1081-amino-acid polypeptide reads, in one-letter code: FHIP family protein GA25918 (1081 aa).

A compositionally biased stretch (polar residues) spans 1 to 11 (MSWLRSSPLRQ). 5 disordered regions span residues 1–31 (MSWL…GSLR), 504–524 (ARPK…EQPI), 650–685 (ADEE…MGGG), 830–913 (NENS…AASS), and 933–1027 (NNNN…SEPA). Residue Ser508 is modified to Phosphoserine. Over residues 657-668 (TDLTVTTTTASE) the composition is skewed to low complexity. Ser833 carries the phosphoserine modification. Low complexity predominate over residues 840 to 856 (QPQTTLSQQQQQQQGQQ). The span at 857–876 (RSAYATLSAATPVQATQTSA) shows a compositional bias: polar residues. Low complexity-rich tracts occupy residues 891–913 (SKSI…AASS) and 933–953 (NNNN…GTGT). Over residues 954–963 (CETSLSTNPQ) the composition is skewed to polar residues. The segment covering 964-993 (SGAAAARSTGTATTANGNSSNSNISIGGST) has biased composition (low complexity). Polar residues predominate over residues 994–1010 (QTLSGHSNTTTYSSSTL).

The protein belongs to the FHIP family.

The polypeptide is FHIP family protein GA25918 (Drosophila pseudoobscura pseudoobscura (Fruit fly)).